The following is a 252-amino-acid chain: Probable transcriptional regulatory protein Kole_1935 (252 aa).

This sequence belongs to the TACO1 family.

It is found in the cytoplasm. This chain is Probable transcriptional regulatory protein Kole_1935, found in Kosmotoga olearia (strain ATCC BAA-1733 / DSM 21960 / TBF 19.5.1).